The following is a 102-amino-acid chain: Glutaredoxin (102 aa).

One can recognise a Glutaredoxin domain in the interval 3–102 (MTKTKELVSS…VPLLTEAGAV (100 aa)). C23 and C26 form a disulfide bridge.

This sequence belongs to the glutaredoxin family. CPYC subfamily.

Its subcellular location is the cytoplasm. Its function is as follows. Has a glutathione-disulfide oxidoreductase activity in the presence of NADPH and glutathione reductase. Reduces low molecular weight disulfides and proteins. The chain is Glutaredoxin from Ricinus communis (Castor bean).